The sequence spans 385 residues: Mitochondrial fission regulator 2 (385 aa).

S2 is modified (N-acetylserine). S119 is modified (phosphoserine). Residues 195–268 (SVDPDQLPGS…SHHSKSQRNK (74 aa)) form a disordered region. Pro residues predominate over residues 207–216 (SPPPPPPLPP). The span at 231–257 (PGSNNICDSDNPATEMSKQNPAANKTN) shows a compositional bias: polar residues. Phosphoserine is present on residues S291 and S328. Positions 331-363 (KENRSWESSPFSSPETSRFGHHISQSEGQRTKE) are disordered. Over residues 336-346 (WESSPFSSPET) the composition is skewed to polar residues.

Belongs to the MTFR1 family.

It localises to the mitochondrion. May play a role in mitochondrial aerobic respiration essentially in the testis. Can also promote mitochondrial fission. The sequence is that of Mitochondrial fission regulator 2 (MTFR2) from Homo sapiens (Human).